Consider the following 71-residue polypeptide: MAFLKKSLFLVLFLGLVSLSICEEEKREEENEEVQEDDDQSEEKRGFLDVIKHVGKAALGVVTHLINQGEQ.

Residues 1-22 (MAFLKKSLFLVLFLGLVSLSIC) form the signal peptide. Residues 23–43 (EEEKREEENEEVQEDDDQSEE) constitute a propeptide that is removed on maturation. Glutamine 68 bears the Glutamine amide mark. Positions 70-71 (EQ) are excised as a propeptide.

In terms of tissue distribution, expressed by the skin glands.

It localises to the secreted. In terms of biological role, has antimicrobial activity against Gram-negative bacterium E.coli (MIC=26.35 uM), against Gram-positive bacterium S.aureus (MIC=6.59 uM) and against fungus C.albicans (MIC=13.18 uM). At higher concentrations also has a bactericidal and fungicidal effect. Has hemagglutinating activity against horse erythrocytes. This Cruziohyla calcarifer (Splendid leaf frog) protein is Cruzioseptin-2.